We begin with the raw amino-acid sequence, 207 residues long: Ras-related protein Rab-8A (207 aa).

Residues S17, G18, V19, G20, K21, T22, C23, S35, S39, and T40 each coordinate GTP. Mg(2+) is bound at residue T22. Short sequence motifs (switch) lie at residues 31 to 45 (DAFN…GIDF) and 63 to 80 (DTAG…YYRG). Mg(2+) is bound by residues T40 and D63. GTP is bound at residue G66. The residue at position 72 (T72) is a Phosphothreonine; by LRRK2. Residues N121, K122, D124, A152, and K153 each contribute to the GTP site. Phosphoserine occurs at positions 181 and 185. A Cysteine methyl ester modification is found at C204. A lipid anchor (S-geranylgeranyl cysteine) is attached at C204. The propeptide at 205–207 (SLL) is removed in mature form.

This sequence belongs to the small GTPase superfamily. Rab family. Interacts (GTP-bound form) with MICALL1; regulates RAB8A association with recycling endosomes. Interacts with MICALL2; competes with RAB13 and is involved in E-cadherin endocytic recycling. Interacts (GTP-bound form) with MICAL1, MICALCL, MICAL3 and EHBP1L1; two molecules of RAB8A can bind to one molecule of the effector protein; ternary complexes of RAB8A, RAB13 and either MICAL1 or EHBP1L1 are possible. Interacts (GTP-bound form) with EHBP1. Interacts with EHD1. Interacts with MAP4K2 and SYTL4. Interacts with SGSM1 and SGSM3. Interacts with RABIF, RIMS2, RPH3A and RPH3A. Interacts with OPTN. Interacts with MYO5B. Interacts with CIMAP3. Interacts with BIRC6/bruce. Interacts with OCRL. Interacts with AHI1. Interacts with DCDC1. Interacts with LRRK2; interaction facilitates phosphorylation of Thr-72. Interacts with RAB31P, GDI1, GDI2, CHM, CHML, RABGGTA, RABGGTB, TBC1D15 and INPP5B; these interactions are dependent on Thr-72 not being phosphorylated. Interacts with RILPL1 and RILPL2; these interactions are dependent on the phosphorylation of Thr-72 by LRRK2. Interacts with DZIP1; prevents inhibition by the GDP-dissociation inhibitor GDI2. Interacts with RAB3IP/Rabin8, RAB3IP functions as guanine exchange factor (GEF) towards RAB8A. Interacts (in GDP-bound form) with RPGR, RPGR functions as GEF towards RAB8A. Mg(2+) serves as cofactor. Post-translationally, phosphorylation of Thr-72 in the switch II region by LRRK2 prevents the association of RAB regulatory proteins, including CHM, CHML and RAB GDP dissociation inhibitors GDI1 and GDI2. Phosphorylation by LRRK2 is required for localization to stressed lysosomes.

The protein localises to the cell membrane. It is found in the golgi apparatus. It localises to the endosome membrane. The protein resides in the recycling endosome membrane. Its subcellular location is the cell projection. The protein localises to the cilium. It is found in the cytoplasmic vesicle. It localises to the phagosome membrane. The protein resides in the cytoplasm. Its subcellular location is the cytoskeleton. The protein localises to the microtubule organizing center. It is found in the centrosome. It localises to the centriole. The protein resides in the cilium basal body. Its subcellular location is the midbody. The protein localises to the lysosome. It catalyses the reaction GTP + H2O = GDP + phosphate + H(+). Regulated by guanine nucleotide exchange factors (GEFs) such as RAB3IP/Rabin8 and RPGR which promote the exchange of bound GDP for free GTP, GTPase activating proteins (GAPs) which increase the GTP hydrolysis activity, and GDP dissociation inhibitors (GDIs) which inhibit the dissociation of the nucleotide from the GTPase. Activated in response to insulin. The small GTPases Rab are key regulators of intracellular membrane trafficking, from the formation of transport vesicles to their fusion with membranes. Rabs cycle between an inactive GDP-bound form and an active GTP-bound form that is able to recruit to membranes different sets of downstream effectors directly responsible for vesicle formation, movement, tethering and fusion. RAB8A is involved in polarized vesicular trafficking and neurotransmitter release. Together with RAB11A, RAB3IP, the exocyst complex, PARD3, PRKCI, ANXA2, CDC42 and DNMBP promotes transcytosis of PODXL to the apical membrane initiation sites (AMIS), apical surface formation and lumenogenesis. Regulates the compacted morphology of the Golgi. Together with MYO5B and RAB11A participates in epithelial cell polarization. Also involved in membrane trafficking to the cilium and ciliogenesis. Together with MICALL2, may also regulate adherens junction assembly. May play a role in insulin-induced transport to the plasma membrane of the glucose transporter GLUT4 and therefore play a role in glucose homeostasis. Involved in autophagy. Participates in the export of a subset of neosynthesized proteins through a Rab8-Rab10-Rab11-dependent endososomal export route. Targeted to and stabilized on stressed lysosomes through LRRK2 phosphorylation. Suppresses stress-induced lysosomal enlargement through EHBP1 and EHNP1L1 effector proteins. In Mus musculus (Mouse), this protein is Ras-related protein Rab-8A.